Reading from the N-terminus, the 83-residue chain is Small integral membrane protein 10 (83 aa).

The helical transmembrane segment at Phe-64–Tyr-82 threads the bilayer.

It localises to the membrane. The chain is Small integral membrane protein 10 (SMIM10) from Homo sapiens (Human).